The sequence spans 36 residues: Turgencin-A (36 aa).

3 disulfide bridges follow: Cys8/Cys33, Cys12/Cys29, and Cys17/Cys26. Met10 carries the methionine sulfoxide modification. Val36 carries the post-translational modification Valine amide.

It localises to the secreted. Its function is as follows. Has antimicrobial activity against Gram-positive bacteria (C.glutamicum ATCC 13032 (MIC=0.4 uM), B.subtilis ATCC 23857 (MIC=0.4 uM) and S.aureus ATCC 9144 (MIC=6.3 uM)) and Gram-negative bacteria (E.coli ATCC 25922 (MIC=0.8 uM) and P.aeruginosa ATCC 27853 (MIC=1.6 uM)). The sequence is that of Turgencin-A from Synoicum turgens (Colonial ascidian).